The following is a 160-amino-acid chain: NADH-quinone oxidoreductase subunit I (160 aa).

4Fe-4S ferredoxin-type domains follow at residues 51–80 and 91–120; these read RRYK…IEAA and TKYD…EGPN. Cysteine 60, cysteine 63, cysteine 66, cysteine 70, cysteine 100, cysteine 103, cysteine 106, and cysteine 110 together coordinate [4Fe-4S] cluster.

This sequence belongs to the complex I 23 kDa subunit family. NDH-1 is composed of 14 different subunits. Subunits NuoA, H, J, K, L, M, N constitute the membrane sector of the complex. [4Fe-4S] cluster serves as cofactor.

It localises to the cell inner membrane. The catalysed reaction is a quinone + NADH + 5 H(+)(in) = a quinol + NAD(+) + 4 H(+)(out). Functionally, NDH-1 shuttles electrons from NADH, via FMN and iron-sulfur (Fe-S) centers, to quinones in the respiratory chain. The immediate electron acceptor for the enzyme in this species is believed to be ubiquinone. Couples the redox reaction to proton translocation (for every two electrons transferred, four hydrogen ions are translocated across the cytoplasmic membrane), and thus conserves the redox energy in a proton gradient. This is NADH-quinone oxidoreductase subunit I from Neorickettsia sennetsu (strain ATCC VR-367 / Miyayama) (Ehrlichia sennetsu).